The sequence spans 2126 residues: Phthioceranic/hydroxyphthioceranic acid synthase (2126 aa).

The Ketosynthase family 3 (KS3) domain occupies 24 to 447 (VTPVAVIGMA…GTNVHAVVEQ (424 aa)). The active-site Acyl-thioester intermediate; for beta-ketoacyl synthase activity is the C196. Residues H331 and H367 each act as for beta-ketoacyl synthase activity in the active site. Residues 449-549 (PQTEAQPHAA…VYQPAVGQDD (101 aa)) are linker domain (LD). Positions 550–849 (RGPVWLFSGQ…VAALAGMRRE (300 aa)) are acyltransferase (AT). The active-site Acyl-ester intermediate; for acyltransferase activity is S641. The segment at 909-1191 (STVAVHPLLG…LAVCGLRIGT (283 aa)) is dehydratase (DH). Residues 914 to 1032 (HPLLGAHVRL…RRASAVLQQV (119 aa)) are N-terminal hotdog fold. Residues 914 to 1198 (HPLLGAHVRL…IGTGVSERDK (285 aa)) form the PKS/mFAS DH domain. The Proton acceptor; for dehydratase activity role is filled by H947. Residues 1051-1198 (PCRVDGEDLR…IGTGVSERDK (148 aa)) form a C-terminal hotdog fold region. Catalysis depends on D1115, which acts as the Proton donor; for dehydratase activity. The pseudo beta-ketoacyl reductase (PsiKR) stretch occupies residues 1227 to 1398 (KWLLISDCAA…SEEDETAWRD (172 aa)). The tract at residues 1426–1750 (SGMRLQIRTP…EHTGKLVLHI (325 aa)) is enoylreductase (ER). Residues 1772–2019 (GSYIITGGLG…AERSRFFEVF (248 aa)) are beta-ketoacyl reductase (KR). NADP(+) contacts are provided by residues 1780–1783 (LGGL), 1803–1806 (SRTQ), 1831–1832 (DI), and 1904–1905 (FS). Residues 2040 to 2126 (DEWPARLRQL…DAPAAALSSQ (87 aa)) form the Carrier domain. An O-(pantetheine 4'-phosphoryl)serine modification is found at S2075.

The cofactor is pantetheine 4'-phosphate.

It catalyses the reaction hexadecanoyl-[(hydroxy)phthioceranic acid synthase] + 7 (S)-methylmalonyl-CoA + 14 NADPH + 21 H(+) = C37-phthioceranyl-[(hydroxy)phthioceranic acid synthase] + 7 CO2 + 14 NADP(+) + 7 CoA + 7 H2O. The catalysed reaction is hexadecanoyl-[(hydroxy)phthioceranic acid synthase] + 8 (S)-methylmalonyl-CoA + 16 NADPH + 24 H(+) = C40-phthioceranyl-[(hydroxy)phthioceranic acid synthase] + 8 CO2 + 16 NADP(+) + 8 CoA + 8 H2O. The sequence is that of Phthioceranic/hydroxyphthioceranic acid synthase (pks2) from Mycobacterium bovis (strain BCG / Pasteur 1173P2).